The chain runs to 274 residues: Thiamine kinase (274 aa).

It belongs to the thiamine kinase family.

It catalyses the reaction thiamine + ATP = thiamine phosphate + ADP + H(+). It participates in cofactor biosynthesis; thiamine diphosphate biosynthesis; thiamine phosphate from thiamine: step 1/1. Its function is as follows. Catalyzes the ATP-dependent phosphorylation of thiamine to thiamine phosphate. Is involved in thiamine salvage. The chain is Thiamine kinase from Escherichia coli (strain SMS-3-5 / SECEC).